Here is a 448-residue protein sequence, read N- to C-terminus: Glutamyl-tRNA reductase (448 aa).

Substrate-binding positions include 49 to 52, S109, 114 to 116, and Q120; these read TCNR and ETQ. C50 serves as the catalytic Nucleophile. Position 189–194 (189–194) interacts with NADP(+); the sequence is GAGEMG.

The protein belongs to the glutamyl-tRNA reductase family. Homodimer.

It carries out the reaction (S)-4-amino-5-oxopentanoate + tRNA(Glu) + NADP(+) = L-glutamyl-tRNA(Glu) + NADPH + H(+). It functions in the pathway porphyrin-containing compound metabolism; protoporphyrin-IX biosynthesis; 5-aminolevulinate from L-glutamyl-tRNA(Glu): step 1/2. Functionally, catalyzes the NADPH-dependent reduction of glutamyl-tRNA(Glu) to glutamate 1-semialdehyde (GSA). This chain is Glutamyl-tRNA reductase, found in Staphylococcus epidermidis (strain ATCC 35984 / DSM 28319 / BCRC 17069 / CCUG 31568 / BM 3577 / RP62A).